Reading from the N-terminus, the 389-residue chain is Phosphopentomutase (389 aa).

6 residues coordinate Mn(2+): Asp10, Asp282, His287, Asp323, His324, and His335.

Belongs to the phosphopentomutase family. The cofactor is Mn(2+).

The protein resides in the cytoplasm. It catalyses the reaction 2-deoxy-alpha-D-ribose 1-phosphate = 2-deoxy-D-ribose 5-phosphate. It carries out the reaction alpha-D-ribose 1-phosphate = D-ribose 5-phosphate. The protein operates within carbohydrate degradation; 2-deoxy-D-ribose 1-phosphate degradation; D-glyceraldehyde 3-phosphate and acetaldehyde from 2-deoxy-alpha-D-ribose 1-phosphate: step 1/2. Functionally, isomerase that catalyzes the conversion of deoxy-ribose 1-phosphate (dRib-1-P) and ribose 1-phosphate (Rib-1-P) to deoxy-ribose 5-phosphate (dRib-5-P) and ribose 5-phosphate (Rib-5-P), respectively. The protein is Phosphopentomutase of Clostridium kluyveri (strain NBRC 12016).